The primary structure comprises 454 residues: Pyrrolysine--tRNA ligase (454 aa).

The disordered stretch occupies residues 102-138 (TRTKKAMPKSVARAPKPLENTEAAQAQPSGSKFSPAI). Polar residues predominate over residues 123-133 (EAAQAQPSGSK).

It belongs to the class-II aminoacyl-tRNA synthetase family.

The protein resides in the cytoplasm. The catalysed reaction is tRNA(Pyl) + L-pyrrolysine + ATP = L-pyrrolysyl-tRNA(Pyl) + AMP + diphosphate. In terms of biological role, catalyzes the attachment of pyrrolysine to tRNA(Pyl). Pyrrolysine is a lysine derivative encoded by the termination codon UAG. This is Pyrrolysine--tRNA ligase from Methanosarcina mazei (strain ATCC BAA-159 / DSM 3647 / Goe1 / Go1 / JCM 11833 / OCM 88) (Methanosarcina frisia).